The sequence spans 230 residues: Secretory carrier-associated membrane protein 4 (230 aa).

The Cytoplasmic portion of the chain corresponds to 1 to 39 (MAGKENNFPPLPHFLPLKPCFYQDFSDEIPVEHQVLVKR). 4 helical membrane-spanning segments follow: residues 40-60 (IYRLWMFYCTTLGVNLVACLA), 61-81 (WWIAGGAGANFGLAMLWLVLF), 106-126 (MAFFFIFGAQFVLTVIQAIGF), and 149-169 (VVMLIPAIMFSLSAVVMAITI). At 170–230 (VKVHRIYRGA…SYSTSGSQWP (61 aa)) the chain is on the cytoplasmic side. Phosphothreonine is present on Thr194. Positions 197–230 (NPPSREAQFNSFSGNSLPEYPTVPSYSTSGSQWP) are disordered. Polar residues-rich tracts occupy residues 203-212 (AQFNSFSGNS) and 220-230 (PSYSTSGSQWP).

This sequence belongs to the SCAMP family.

Its subcellular location is the membrane. In terms of biological role, probably involved in membrane protein trafficking. The polypeptide is Secretory carrier-associated membrane protein 4 (Scamp4) (Rattus norvegicus (Rat)).